The following is a 393-amino-acid chain: Alpha-pyrone synthesis polyketide synthase-like Pks18 (393 aa).

The disordered stretch occupies residues 1-26 (MNVSAESGAPRRAGQRHEVGLAQLPP). Catalysis depends on Cys-175, which acts as the Nucleophile. Residue His-221 coordinates substrate.

Belongs to the thiolase-like superfamily. Chalcone/stilbene synthases family. In terms of assembly, homodimer.

The protein operates within lipid metabolism; fatty acid biosynthesis. In terms of biological role, involved in the biosynthesis of tri- and tetraketide alpha-pyrones. Pks18 catalyzes the extension of medium- and long-chain aliphatic acyl-CoA substrates by using malonyl-CoA as an extender molecule to synthesize polyketide products. The chain is Alpha-pyrone synthesis polyketide synthase-like Pks18 (pks18) from Mycobacterium bovis (strain ATCC BAA-935 / AF2122/97).